Here is a 315-residue protein sequence, read N- to C-terminus: MGTKKQKTKKKPSDEILETKRKRLSFLVRMEPRKMVLYPLVVFLVAALILAVHFPEKGIDLKGGVVVTVYHVSASPDELASYVKEKTGIDVRAEEFKDPITGLSGIRIYAPAKTAPSKIADEISNAIRLKYKDADVTPRVVDPTFGKIAQKQGIKAVIYAFIGMAIVVFLFFRDPVPSGTIIFSAFSDMVIALATMGILGIELTTATIAALLMLIGYTVDSNILLTTRLLRRKEDTIEDAYLSAVSTGFTMSTTTLGALFILWLVSTSEVIDSITIVLIFGLLADFMNTWIFNAGVLRWYIASPLKFSIKLRRGK.

6 helical membrane-spanning segments follow: residues 35 to 55 (MVLYPLVVFLVAALILAVHFP), 152 to 172 (QGIKAVIYAFIGMAIVVFLFF), 181 to 201 (IIFSAFSDMVIALATMGILGI), 205 to 225 (TATIAALLMLIGYTVDSNILL), 242 to 264 (LSAVSTGFTMSTTTLGALFILWL), and 282 to 302 (LLADFMNTWIFNAGVLRWYIA).

It belongs to the SecD/SecF family. SecF subfamily. In terms of assembly, part of the protein translocation apparatus. Forms a complex with SecD.

The protein resides in the cell membrane. Its function is as follows. Involved in protein export. The chain is Protein-export membrane protein SecF from Thermococcus gammatolerans (strain DSM 15229 / JCM 11827 / EJ3).